A 612-amino-acid chain; its full sequence is Cyclin-dependent kinase 8 (612 aa).

A Protein kinase domain is found at 23-345 (FENSKEIGRG…CEEAMNDIYF (323 aa)). ATP is bound by residues 29–37 (IGRGTYGLV) and Lys57. Asp155 serves as the catalytic Proton acceptor. Low complexity-rich tracts occupy residues 403 to 455 (QQQM…MGQP), 472 to 483 (HQMMQQQHQSQH), 543 to 555 (PQPG…QQRP), 564 to 573 (QGYMNPQMGM), and 600 to 612 (NPQQ…QYHR). Disordered stretches follow at residues 403–483 (QQQM…QSQH) and 543–612 (PQPG…QYHR).

The protein belongs to the protein kinase superfamily. CMGC Ser/Thr protein kinase family. CDC2/CDKX subfamily. In terms of assembly, component of the Mediator complex. Mg(2+) serves as cofactor.

It is found in the nucleus. The catalysed reaction is L-seryl-[protein] + ATP = O-phospho-L-seryl-[protein] + ADP + H(+). It catalyses the reaction L-threonyl-[protein] + ATP = O-phospho-L-threonyl-[protein] + ADP + H(+). It carries out the reaction [DNA-directed RNA polymerase] + ATP = phospho-[DNA-directed RNA polymerase] + ADP + H(+). In terms of biological role, component of the Mediator complex, a coactivator involved in regulated gene transcription of nearly all RNA polymerase II-dependent genes. Mediator functions as a bridge to convey information from gene-specific regulatory proteins to the basal RNA polymerase II transcription machinery. Mediator is recruited to promoters by direct interactions with regulatory proteins and serves as a scaffold for the assembly of a functional pre-initiation complex with RNA polymerase II and the general transcription factors. Phosphorylates the CTD (C-terminal domain) of the large subunit of RNA polymerase II (RNAp II), which may inhibit the formation of a transcription initiation complex. The sequence is that of Cyclin-dependent kinase 8 (cdk-8) from Caenorhabditis briggsae.